A 981-amino-acid polypeptide reads, in one-letter code: Probable NAD kinase 2, chloroplastic (981 aa).

The interval A319–R364 is calmodulin-binding. Disordered regions lie at residues A369–M413 and T551–N601. 3 stretches are compositionally biased toward polar residues: residues T387–P406, T551–S563, and S581–K596.

It belongs to the NAD kinase family.

The protein localises to the plastid. It is found in the chloroplast. The catalysed reaction is NAD(+) + ATP = ADP + NADP(+) + H(+). Involved in chlorophyll synthesis and chloroplast protection against oxidative damage. In Oryza sativa subsp. japonica (Rice), this protein is Probable NAD kinase 2, chloroplastic.